The chain runs to 276 residues: Octanoyltransferase LipM (276 aa).

Residues 31 to 246 (GKVPPTVRFY…GFASGLEVEL (216 aa)) enclose the BPL/LPL catalytic domain. The active-site Acyl-thioester intermediate is Cys148.

The protein belongs to the octanoyltransferase LipM family. As to quaternary structure, monomer.

It catalyses the reaction octanoyl-[ACP] + L-lysyl-[protein] = N(6)-octanoyl-L-lysyl-[protein] + holo-[ACP] + H(+). It participates in protein modification; protein lipoylation via endogenous pathway; protein N(6)-(lipoyl)lysine from octanoyl-[acyl-carrier-protein]. Functionally, catalyzes the transfer of endogenously produced octanoic acid from octanoyl-acyl-carrier-protein onto the lipoyl domain of GcvH, an intermediate carrier during protein lipoylation. This Brevibacillus brevis (strain 47 / JCM 6285 / NBRC 100599) protein is Octanoyltransferase LipM.